The sequence spans 260 residues: Putative imidazole glycerol phosphate synthase subunit hisF3 (260 aa).

Asp-135 is an active-site residue.

The protein belongs to the HisA/HisF family. Heterodimer of HisH and HisF.

The protein localises to the cytoplasm. The enzyme catalyses 5-[(5-phospho-1-deoxy-D-ribulos-1-ylimino)methylamino]-1-(5-phospho-beta-D-ribosyl)imidazole-4-carboxamide + L-glutamine = D-erythro-1-(imidazol-4-yl)glycerol 3-phosphate + 5-amino-1-(5-phospho-beta-D-ribosyl)imidazole-4-carboxamide + L-glutamate + H(+). It functions in the pathway amino-acid biosynthesis; L-histidine biosynthesis; L-histidine from 5-phospho-alpha-D-ribose 1-diphosphate: step 5/9. Its function is as follows. IGPS catalyzes the conversion of PRFAR and glutamine to IGP, AICAR and glutamate. The HisF subunit catalyzes the cyclization activity that produces IGP and AICAR from PRFAR using the ammonia provided by the HisH subunit. The polypeptide is Putative imidazole glycerol phosphate synthase subunit hisF3 (hisF3) (Vibrio vulnificus (strain YJ016)).